The sequence spans 388 residues: F-box protein At5g42460 (388 aa).

One can recognise an F-box domain in the interval 1–47; it reads MTIMSDLPRDLLAEILSRVPLTSLRAVRLTCKKWNDLSKDRSFLKKQ.

The sequence is that of F-box protein At5g42460 from Arabidopsis thaliana (Mouse-ear cress).